The sequence spans 361 residues: Deoxyribonuclease (361 aa).

An N-terminal signal peptide occupies residues 1–24; sequence MMHLLRRGAFAILLIVLLPSAALA. Residue His-149 is part of the active site.

Belongs to the DNase I family. The cofactor is Mg(2+). Ca(2+) serves as cofactor.

The protein localises to the secreted. Its function is as follows. DNA nuclease able to digest short and long DNA substrate. Is resistant to ionic strength and thus active at high salt concentration. The sequence is that of Deoxyribonuclease from Thioalkalivibrio sp. (strain K90mix).